Reading from the N-terminus, the 923-residue chain is Cell cycle and apoptosis regulator protein 2 (923 aa).

A disordered region spans residues 1–35 (MSQFKRQRINPLPGGRNFSGTASTSLLGPPPGLLT). At T35 the chain carries Phosphothreonine. At K112 the chain carries N6-acetyllysine; by KAT8. K123 bears the N6-methyllysine mark. S124 bears the Phosphoserine mark. Disordered regions lie at residues 178–218 (LNRF…KKPR), 446–510 (KAAE…PAVI), and 568–643 (VSPP…SEDL). R180 is modified (omega-N-methylarginine). A compositionally biased stretch (basic and acidic residues) spans 188-200 (GRLDQGRSDDYDS). K215 bears the N6-acetyllysine; by KAT8 mark. Residues 446–458 (KAAEAAPPTQEAQ) are compositionally biased toward low complexity. A Phosphothreonine; by ATM, ATR and CK2 modification is found at T454. T484 carries the post-translational modification Phosphothreonine. A Phosphoserine modification is found at S569. Basic and acidic residues predominate over residues 572-602 (EPEKEEAAKEEATKEEEAIKEEVVKEPKDEA). K591 participates in a covalent cross-link: Glycyl lysine isopeptide (Lys-Gly) (interchain with G-Cter in SUMO2 and SUMO3); alternate. K591 participates in a covalent cross-link: Glycyl lysine isopeptide (Lys-Gly) (interchain with G-Cter in SUMO2); alternate. The interaction with MCC stretch occupies residues 610–670 (ESEAPLKEDG…EEFAGAKLED (61 aa)). Residues S627, S675, S678, S681, S687, and S808 each carry the phosphoserine modification. Residues 704–923 (DCLLAFVFFD…VEKEEPAPSN (220 aa)) form an interaction with NR1D1 region. The stretch at 829–909 (LENKIHTLEL…QLEIQRVVEK (81 aa)) forms a coiled coil. T897 carries the post-translational modification Phosphothreonine.

As to quaternary structure, component of the DBIRD complex. Interacts with ZNF326/ZIRD; the interaction is direct. Interacts (via N-terminus) with SIRT1, which inhibits the deacetylation of substrates. Interacts (via N-terminus) with SUV39H1; this interaction abolishes the interaction with SIRT1. Component of a nuclear receptor-mediated transcription complex composed of at least ZNF335, CCAR2 and EMSY; the complex stimulates the transcription of nuclear receptor target genes such as SOX9 and HOXA1. Within the complex interacts with EMSY and interacts with ZNF335 (via C-terminus). Components of this complex may associate with components of a histone methylation complex to form a complex at least composed of ZNF335, HCFC1, CCAR2, EMSY, MKI67, RBBP5, ASH2L and WDR5. Within this complex, interacts with ASH2L. Interacts with NR1D1. Interacts (via N-terminus) with ESR1 and ESR2. Interacts (via N-terminus) with HDAC3 (via C-terminus). Interacts with HDAC1 and MED2F. Interacts with MCC. Interacts (via N-terminus) with NR1H2 and NR1H3 in a ligand-independent manner. Interacts with CSNK2A1. Interacts (via N-terminus) with p53/TP53. Interacts (via N-terminus) with BRCA1 (via the BRCT domains). Interacts (via N-terminus) with CHEK2 (via protein kinase domain). Interacts with PSEM3. Interacts (via N-terminus) with PSIA3 and SENP1. The sumoylated form shows a preferential interaction with SIRT1 as compared to its unmodified form. Interacts with CECR2; may form part of the CERF-1 and/or CEF-5 ISWI chromatin remodeling complexes in embryonic stem cells. ATM/ATR-mediated phosphorylation at Thr-454 upon DNA damage promotes binding to SIRT1. Phosphorylation at Thr-454 promotes its sumoylation by switching the binding partner of CCAR2 from SENP1 to PIAS3. Post-translationally, acetylation at Lys-112 and Lys-215 by KAT8 prevents inhibitory binding to SIRT1 and increases its deacetylase activity. In terms of processing, genotoxic stress induces its sumoylation and sumoylation promotes the SIRT1-CCAR2 interaction which in turn inhibits SIRT1-mediated deacetylation of p53/TP53. Sumoylation leads to transcriptional activation of p53/TP53 by sequestering SIRT1 from p53/TP53. Desumoylated by SENP1. In terms of tissue distribution, expressed in gastric carcinoma tissue and the expression gradually increases with the progression of the carcinoma (at protein level). Expressed ubiquitously in normal tissues. Expressed in 84 to 100% of neoplastic breast, lung, and colon tissues.

The protein resides in the nucleus. It is found in the cytoplasm. It localises to the cytoskeleton. Its subcellular location is the spindle. Functionally, core component of the DBIRD complex, a multiprotein complex that acts at the interface between core mRNP particles and RNA polymerase II (RNAPII) and integrates transcript elongation with the regulation of alternative splicing: the DBIRD complex affects local transcript elongation rates and alternative splicing of a large set of exons embedded in (A + T)-rich DNA regions. Inhibits SIRT1 deacetylase activity leading to increasing levels of p53/TP53 acetylation and p53-mediated apoptosis. Inhibits SUV39H1 methyltransferase activity. Mediates ligand-dependent transcriptional activation by nuclear hormone receptors. Plays a critical role in maintaining genomic stability and cellular integrity following UV-induced genotoxic stress. Regulates the circadian expression of the core clock components NR1D1 and BMAL1. Enhances the transcriptional repressor activity of NR1D1 through stabilization of NR1D1 protein levels by preventing its ubiquitination and subsequent degradation. Represses the ligand-dependent transcriptional activation function of ESR2. Acts as a regulator of PCK1 expression and gluconeogenesis by a mechanism that involves, at least in part, both NR1D1 and SIRT1. Negatively regulates the deacetylase activity of HDAC3 and can alter its subcellular localization. Positively regulates the beta-catenin pathway (canonical Wnt signaling pathway) and is required for MCC-mediated repression of the beta-catenin pathway. Represses ligand-dependent transcriptional activation function of NR1H2 and NR1H3 and inhibits the interaction of SIRT1 with NR1H3. Plays an important role in tumor suppression through p53/TP53 regulation; stabilizes p53/TP53 by affecting its interaction with ubiquitin ligase MDM2. Represses the transcriptional activator activity of BRCA1. Inhibits SIRT1 in a CHEK2 and PSEM3-dependent manner and inhibits the activity of CHEK2 in vitro. This Homo sapiens (Human) protein is Cell cycle and apoptosis regulator protein 2 (CCAR2).